Here is a 192-residue protein sequence, read N- to C-terminus: Thymidine kinase (192 aa).

Residues 9–16 and 87–90 each bind ATP; these read SAMNAGKS and DECQ. E88 acts as the Proton acceptor in catalysis. Zn(2+) contacts are provided by C145, C147, C182, and H185.

This sequence belongs to the thymidine kinase family. In terms of assembly, homotetramer.

It localises to the cytoplasm. The enzyme catalyses thymidine + ATP = dTMP + ADP + H(+). In Aliivibrio fischeri (strain ATCC 700601 / ES114) (Vibrio fischeri), this protein is Thymidine kinase.